Reading from the N-terminus, the 173-residue chain is T-complex protein 1 subunit alpha (173 aa).

It belongs to the TCP-1 chaperonin family. As to quaternary structure, component of the chaperonin-containing T-complex (TRiC), a heterooligomeric complex of about 850 to 900 kDa that forms two stacked rings, 12 to 16 nm in diameter.

It is found in the cytoplasm. Its subcellular location is the cytosol. Its function is as follows. Component of the chaperonin-containing T-complex (TRiC), a molecular chaperone complex that assists the folding of proteins upon ATP hydrolysis. The polypeptide is T-complex protein 1 subunit alpha (Ambystoma mexicanum (Axolotl)).